The primary structure comprises 201 residues: Proteasome subunit beta type-2 (201 aa).

M1 is modified (N-acetylmethionine).

The protein belongs to the peptidase T1B family. As to quaternary structure, the 26S proteasome consists of a 20S proteasome core and two 19S regulatory subunits. The 20S proteasome core is a barrel-shaped complex made of 28 subunits that are arranged in four stacked rings. The two outer rings are each formed by seven alpha subunits, and the two inner rings are formed by seven beta subunits. The proteolytic activity is exerted by three beta-subunits PSMB5, PSMB6 and PSMB7.

Its subcellular location is the cytoplasm. It localises to the nucleus. Non-catalytic component of the 20S core proteasome complex involved in the proteolytic degradation of most intracellular proteins. This complex plays numerous essential roles within the cell by associating with different regulatory particles. Associated with two 19S regulatory particles, forms the 26S proteasome and thus participates in the ATP-dependent degradation of ubiquitinated proteins. The 26S proteasome plays a key role in the maintenance of protein homeostasis by removing misfolded or damaged proteins that could impair cellular functions, and by removing proteins whose functions are no longer required. Associated with the PA200 or PA28, the 20S proteasome mediates ubiquitin-independent protein degradation. This type of proteolysis is required in several pathways including spermatogenesis (20S-PA200 complex) or generation of a subset of MHC class I-presented antigenic peptides (20S-PA28 complex). This is Proteasome subunit beta type-2 (PSMB2) from Bos taurus (Bovine).